The following is a 227-amino-acid chain: Probable septum site-determining protein MinC (227 aa).

The protein belongs to the MinC family. In terms of assembly, interacts with MinD and FtsZ.

In terms of biological role, cell division inhibitor that blocks the formation of polar Z ring septums. Rapidly oscillates between the poles of the cell to destabilize FtsZ filaments that have formed before they mature into polar Z rings. Prevents FtsZ polymerization. In Photorhabdus laumondii subsp. laumondii (strain DSM 15139 / CIP 105565 / TT01) (Photorhabdus luminescens subsp. laumondii), this protein is Probable septum site-determining protein MinC.